Consider the following 86-residue polypeptide: UPF0297 protein SERP1181 (86 aa).

This sequence belongs to the UPF0297 family.

This Staphylococcus epidermidis (strain ATCC 35984 / DSM 28319 / BCRC 17069 / CCUG 31568 / BM 3577 / RP62A) protein is UPF0297 protein SERP1181.